A 348-amino-acid polypeptide reads, in one-letter code: Sulfate/thiosulfate import ATP-binding protein CysA (348 aa).

Positions 3-237 (IRIQELCKQF…PSSPFVYSFV (235 aa)) constitute an ABC transporter domain. Residue 35 to 42 (GPSGSGKT) coordinates ATP.

It belongs to the ABC transporter superfamily. Sulfate/tungstate importer (TC 3.A.1.6) family. As to quaternary structure, the complex is composed of two ATP-binding proteins (CysA), two transmembrane proteins (CysT and CysW) and a solute-binding protein (CysP).

It is found in the cell inner membrane. The catalysed reaction is sulfate(out) + ATP + H2O = sulfate(in) + ADP + phosphate + H(+). It carries out the reaction thiosulfate(out) + ATP + H2O = thiosulfate(in) + ADP + phosphate + H(+). In terms of biological role, part of the ABC transporter complex CysAWTP involved in sulfate/thiosulfate import. Responsible for energy coupling to the transport system. This Xylella fastidiosa (strain 9a5c) protein is Sulfate/thiosulfate import ATP-binding protein CysA.